Reading from the N-terminus, the 419-residue chain is 20-hydroxy-prefusarin hydrolase FUS2 (419 aa).

Ser238 is a catalytic residue.

This sequence belongs to the AB hydrolase superfamily. FUS2 hydrolase family.

It participates in mycotoxin biosynthesis. In terms of biological role, 20-hydroxy-prefusarin hydrolase; part of the gene cluster that mediates the biosynthesis of the mycotoxin fusarin C. Within the cluster, FUS1, FUS2, FUS8 and FUS9 are sufficient for fusarin production. The roles of the other FUS members are yet undetermined. The fusarin C synthetase FUS1 is responsible for the condensation of one acetyl-coenzyme A (CoA) unit with six malonyl-CoA units and the amide linkage of the arising heptaketide and homoserine, subsequently releasing the first intermediate, prefusarin, as an alcohol with an open ring structure. The cytochrome P450 monooxygenase FUS8 participates in multiple oxidation processes at carbon C-20 and is able to use the FUS1 product as substrate, resulting in formation of 20-hydroxy-prefusarin. This reaction seems to be essential before the 2-pyrrolidone ring closure can be catalyzed by FUS2, generating 20-hydroxy-fusarin. FUS8 is able to further oxidizes carbon C-20 after ring closure, resulting in the formation of carboxy-fusarin C. As the last step, FUS9 methylates the hydroxyl group at C-21 to generate fusarin C. Fusarin C can then rearrange to epi-fusarin C, the (z)-isomers, and fusarin A and fusarin D. This is 20-hydroxy-prefusarin hydrolase FUS2 from Gibberella moniliformis (strain M3125 / FGSC 7600) (Maize ear and stalk rot fungus).